The chain runs to 338 residues: Holliday junction branch migration complex subunit RuvB (338 aa).

The segment at methionine 1–tyrosine 180 is large ATPase domain (RuvB-L). Leucine 19, arginine 20, glycine 61, lysine 64, threonine 65, threonine 66, arginine 170, tyrosine 180, and arginine 217 together coordinate ATP. Threonine 65 lines the Mg(2+) pocket. Positions threonine 181–glutamate 251 are small ATPAse domain (RuvB-S). The head domain (RuvB-H) stretch occupies residues glutamate 254–arginine 338. DNA contacts are provided by lysine 309 and arginine 314.

This sequence belongs to the RuvB family. Homohexamer. Forms an RuvA(8)-RuvB(12)-Holliday junction (HJ) complex. HJ DNA is sandwiched between 2 RuvA tetramers; dsDNA enters through RuvA and exits via RuvB. An RuvB hexamer assembles on each DNA strand where it exits the tetramer. Each RuvB hexamer is contacted by two RuvA subunits (via domain III) on 2 adjacent RuvB subunits; this complex drives branch migration. In the full resolvosome a probable DNA-RuvA(4)-RuvB(12)-RuvC(2) complex forms which resolves the HJ.

The protein localises to the cytoplasm. It catalyses the reaction ATP + H2O = ADP + phosphate + H(+). The RuvA-RuvB-RuvC complex processes Holliday junction (HJ) DNA during genetic recombination and DNA repair, while the RuvA-RuvB complex plays an important role in the rescue of blocked DNA replication forks via replication fork reversal (RFR). RuvA specifically binds to HJ cruciform DNA, conferring on it an open structure. The RuvB hexamer acts as an ATP-dependent pump, pulling dsDNA into and through the RuvAB complex. RuvB forms 2 homohexamers on either side of HJ DNA bound by 1 or 2 RuvA tetramers; 4 subunits per hexamer contact DNA at a time. Coordinated motions by a converter formed by DNA-disengaged RuvB subunits stimulates ATP hydrolysis and nucleotide exchange. Immobilization of the converter enables RuvB to convert the ATP-contained energy into a lever motion, pulling 2 nucleotides of DNA out of the RuvA tetramer per ATP hydrolyzed, thus driving DNA branch migration. The RuvB motors rotate together with the DNA substrate, which together with the progressing nucleotide cycle form the mechanistic basis for DNA recombination by continuous HJ branch migration. Branch migration allows RuvC to scan DNA until it finds its consensus sequence, where it cleaves and resolves cruciform DNA. This Caldicellulosiruptor bescii (strain ATCC BAA-1888 / DSM 6725 / KCTC 15123 / Z-1320) (Anaerocellum thermophilum) protein is Holliday junction branch migration complex subunit RuvB.